The sequence spans 444 residues: N-succinylarginine dihydrolase (444 aa).

Residues 19 to 28 (AGLSFGNVAS), Asn110, and 137 to 138 (HR) contribute to the substrate site. Glu174 is an active-site residue. Arg214 lines the substrate pocket. Residue His250 is part of the active site. 2 residues coordinate substrate: Asp252 and Asn362. Cys368 (nucleophile) is an active-site residue.

This sequence belongs to the succinylarginine dihydrolase family. As to quaternary structure, homodimer.

It carries out the reaction N(2)-succinyl-L-arginine + 2 H2O + 2 H(+) = N(2)-succinyl-L-ornithine + 2 NH4(+) + CO2. Its pathway is amino-acid degradation; L-arginine degradation via AST pathway; L-glutamate and succinate from L-arginine: step 2/5. In terms of biological role, catalyzes the hydrolysis of N(2)-succinylarginine into N(2)-succinylornithine, ammonia and CO(2). The protein is N-succinylarginine dihydrolase of Shewanella amazonensis (strain ATCC BAA-1098 / SB2B).